The primary structure comprises 119 residues: DNA-binding protein TubR (119 aa).

In terms of assembly, homodimer. Binds to TubZ filaments via the C-terminus of TubZ. DNA is not required for binding to TubZ.

In terms of biological role, a DNA-binding protein that is part of the type III plasmid partition system used to ensure correct segregation of the pBc10987 plasmid. Binds TubZ filaments but does not influence the GTPase activity of TubZ with or without DNA. Cooperatively binds to multiple regions in tubC (centromere-like site) upstream of its own gene with consensus sequence N(T/A)ATTNC(C/G)GNAAT(A/T)N; probably forms an extended DNA-protein filament. Binds sites in its own promoter region and presumably represses its expression; its effect on RNA expression has not been shown. Does not specifically bind to the putative origin of replication on pBc10987. In Bacillus cereus (strain ATCC 10987 / NRS 248), this protein is DNA-binding protein TubR.